The following is a 453-amino-acid chain: DNA repair protein RadA (453 aa).

A C4-type zinc finger spans residues 10 to 27 (CQECGYQSPKYLGRCPNC). An ATP-binding site is contributed by 95–102 (GDPGIGKS). The short motif at 251-255 (KNRFG) is the RadA KNRFG motif element. The tract at residues 350–453 (DAYLKSAGGV…VGQVLKAVFS (104 aa)) is lon-protease-like.

Belongs to the RecA family. RadA subfamily.

Functionally, DNA-dependent ATPase involved in processing of recombination intermediates, plays a role in repairing DNA breaks. Stimulates the branch migration of RecA-mediated strand transfer reactions, allowing the 3' invading strand to extend heteroduplex DNA faster. Binds ssDNA in the presence of ADP but not other nucleotides, has ATPase activity that is stimulated by ssDNA and various branched DNA structures, but inhibited by SSB. Does not have RecA's homology-searching function. In Streptococcus pyogenes serotype M6 (strain ATCC BAA-946 / MGAS10394), this protein is DNA repair protein RadA.